A 478-amino-acid chain; its full sequence is MKITLPDFTRAGVLVVGDVMLDRYWYGPTNRISPEAPVPVVKVDSVEERPGGAANVAMNIASLGAKSRLVGLTGVDDAARALSAALSGVNVQCDFVSVATHPTITKLRVLSRNQQLIRLDFEEGFDGVDPEPMLERIQRSLPGIGALVLSDYAKGALATVETMIALARKAGVPVLVDPKGTDFSRYHGATLLTPNLSEFEAVVGKCKSEADIVERGTALMQQHALSALLVTRSEHGMTLLQPGKAPFHMPTQAQEVFDVTGAGDTVIGVLATALAAGNTLEESCFLANAAAGVVVGKLGTSTVSPMELENAIHARPESGFGVMSEAQLIVEVKKARQRGEKVVMTNGVFDILHAGHVSYLANARKLGDRLIVAVNSDASTRRLKGETRPVNPLLNRMMVLGALEAVDWVIGFEEDTPQRAIAEILPDLLVKGGDYKPEDIAGSKEVWANGGDVQVLNFEDGISTSNIIKTIISGSGKN.

The tract at residues 1 to 318 (MKITLPDFTR…ENAIHARPES (318 aa)) is ribokinase. Residue 195 to 198 (NLSE) coordinates ATP. Asp-264 is a catalytic residue. The tract at residues 344–478 (MTNGVFDILH…KTIISGSGKN (135 aa)) is cytidylyltransferase.

In the N-terminal section; belongs to the carbohydrate kinase PfkB family. It in the C-terminal section; belongs to the cytidylyltransferase family. Homodimer.

It carries out the reaction D-glycero-beta-D-manno-heptose 7-phosphate + ATP = D-glycero-beta-D-manno-heptose 1,7-bisphosphate + ADP + H(+). The enzyme catalyses D-glycero-beta-D-manno-heptose 1-phosphate + ATP + H(+) = ADP-D-glycero-beta-D-manno-heptose + diphosphate. Its pathway is nucleotide-sugar biosynthesis; ADP-L-glycero-beta-D-manno-heptose biosynthesis; ADP-L-glycero-beta-D-manno-heptose from D-glycero-beta-D-manno-heptose 7-phosphate: step 1/4. It participates in nucleotide-sugar biosynthesis; ADP-L-glycero-beta-D-manno-heptose biosynthesis; ADP-L-glycero-beta-D-manno-heptose from D-glycero-beta-D-manno-heptose 7-phosphate: step 3/4. Catalyzes the phosphorylation of D-glycero-D-manno-heptose 7-phosphate at the C-1 position to selectively form D-glycero-beta-D-manno-heptose-1,7-bisphosphate. In terms of biological role, catalyzes the ADP transfer from ATP to D-glycero-beta-D-manno-heptose 1-phosphate, yielding ADP-D-glycero-beta-D-manno-heptose. This Erwinia tasmaniensis (strain DSM 17950 / CFBP 7177 / CIP 109463 / NCPPB 4357 / Et1/99) protein is Bifunctional protein HldE.